We begin with the raw amino-acid sequence, 100 residues long: Urease subunit gamma (100 aa).

Belongs to the urease gamma subunit family. In terms of assembly, heterotrimer of UreA (gamma), UreB (beta) and UreC (alpha) subunits. Three heterotrimers associate to form the active enzyme.

The protein localises to the cytoplasm. It catalyses the reaction urea + 2 H2O + H(+) = hydrogencarbonate + 2 NH4(+). The protein operates within nitrogen metabolism; urea degradation; CO(2) and NH(3) from urea (urease route): step 1/1. The polypeptide is Urease subunit gamma (Opitutus terrae (strain DSM 11246 / JCM 15787 / PB90-1)).